The chain runs to 470 residues: Poly(A) polymerase catalytic subunit (470 aa).

Active-site residues include Asp192 and Asp194.

The protein belongs to the poxviridae poly(A) polymerase catalytic subunit family. Heterodimer of a large (catalytic) subunit and a small (regulatory) subunit.

It carries out the reaction RNA(n) + ATP = RNA(n)-3'-adenine ribonucleotide + diphosphate. Polymerase that creates the 3'-poly(A) tail of mRNA's. The chain is Poly(A) polymerase catalytic subunit (PAPL) from Oryctolagus cuniculus (Rabbit).